A 132-amino-acid chain; its full sequence is Large ribosomal subunit protein bL21 (132 aa).

Residues 112–132 (AEKPARKPRAKKTNEVTTDGA) are disordered.

Belongs to the bacterial ribosomal protein bL21 family. As to quaternary structure, part of the 50S ribosomal subunit. Contacts protein L20.

Functionally, this protein binds to 23S rRNA in the presence of protein L20. The protein is Large ribosomal subunit protein bL21 of Dehalococcoides mccartyi (strain ATCC BAA-2266 / KCTC 15142 / 195) (Dehalococcoides ethenogenes (strain 195)).